Consider the following 392-residue polypeptide: DNA polymerase IV (392 aa).

Residues 6–186 form the UmuC domain; the sequence is IVHLDADAFF…LPIGKLPGVG (181 aa). Residues aspartate 10 and aspartate 103 each coordinate Mg(2+). The active site involves glutamate 104.

The protein belongs to the DNA polymerase type-Y family. In terms of assembly, monomer. Requires Mg(2+) as cofactor.

The protein localises to the cytoplasm. It carries out the reaction DNA(n) + a 2'-deoxyribonucleoside 5'-triphosphate = DNA(n+1) + diphosphate. In terms of biological role, poorly processive, error-prone DNA polymerase involved in untargeted mutagenesis. Copies undamaged DNA at stalled replication forks, which arise in vivo from mismatched or misaligned primer ends. These misaligned primers can be extended by PolIV. Exhibits no 3'-5' exonuclease (proofreading) activity. May be involved in translesional synthesis, in conjunction with the beta clamp from PolIII. The chain is DNA polymerase IV from Opitutus terrae (strain DSM 11246 / JCM 15787 / PB90-1).